The chain runs to 103 residues: Large ribosomal subunit protein bL21 (103 aa).

It belongs to the bacterial ribosomal protein bL21 family. In terms of assembly, part of the 50S ribosomal subunit. Contacts protein L20.

Functionally, this protein binds to 23S rRNA in the presence of protein L20. The chain is Large ribosomal subunit protein bL21 from Polaromonas sp. (strain JS666 / ATCC BAA-500).